The following is a 297-amino-acid chain: 4-hydroxy-tetrahydrodipicolinate synthase (297 aa).

A pyruvate-binding site is contributed by Thr46. The active-site Proton donor/acceptor is the Tyr134. Lys162 acts as the Schiff-base intermediate with substrate in catalysis. Position 204 (Ile204) interacts with pyruvate.

This sequence belongs to the DapA family. In terms of assembly, homotetramer; dimer of dimers.

The protein resides in the cytoplasm. It catalyses the reaction L-aspartate 4-semialdehyde + pyruvate = (2S,4S)-4-hydroxy-2,3,4,5-tetrahydrodipicolinate + H2O + H(+). The protein operates within amino-acid biosynthesis; L-lysine biosynthesis via DAP pathway; (S)-tetrahydrodipicolinate from L-aspartate: step 3/4. In terms of biological role, catalyzes the condensation of (S)-aspartate-beta-semialdehyde [(S)-ASA] and pyruvate to 4-hydroxy-tetrahydrodipicolinate (HTPA). The polypeptide is 4-hydroxy-tetrahydrodipicolinate synthase (Stenotrophomonas maltophilia (strain K279a)).